An 824-amino-acid chain; its full sequence is Translation initiation factor IF-2 (824 aa).

Disordered stretches follow at residues 1 to 32 (MSDT…GRTK) and 45 to 232 (VPKA…MGGQ). The span at 45 to 57 (VPKAGATTSAGGK) shows a compositional bias: low complexity. Over residues 86 to 144 (KAREAEEEAARIAEEKARAEERERRRAEQEERERAEREREESLKAKAEEDKRRKDEAEA) the composition is skewed to basic and acidic residues. Low complexity predominate over residues 145-167 (AAKAAAAPAAEPVVQRPAAKAAP). A compositionally biased stretch (basic and acidic residues) spans 170–193 (APRKQQDRDRDNKRGGKGNDDSRR). Residues 321–489 (TRPPVVTIMG…AIALQAEILE (169 aa)) form the tr-type G domain. Residues 330–337 (GHVDHGKT) are G1. 330 to 337 (GHVDHGKT) lines the GTP pocket. The interval 355–359 (GITQH) is G2. The interval 377 to 380 (DTPG) is G3. GTP contacts are provided by residues 377 to 381 (DTPGH) and 431 to 434 (NKID). A G4 region spans residues 431–434 (NKID). Residues 467-469 (SAI) are G5.

The protein belongs to the TRAFAC class translation factor GTPase superfamily. Classic translation factor GTPase family. IF-2 subfamily.

The protein resides in the cytoplasm. One of the essential components for the initiation of protein synthesis. Protects formylmethionyl-tRNA from spontaneous hydrolysis and promotes its binding to the 30S ribosomal subunits. Also involved in the hydrolysis of GTP during the formation of the 70S ribosomal complex. The protein is Translation initiation factor IF-2 of Roseobacter denitrificans (strain ATCC 33942 / OCh 114) (Erythrobacter sp. (strain OCh 114)).